We begin with the raw amino-acid sequence, 167 residues long: GTP-dependent dephospho-CoA kinase (167 aa).

Aspartate 39, valine 41, aspartate 58, lysine 60, and glutamate 117 together coordinate GTP.

This sequence belongs to the GTP-dependent DPCK family.

The catalysed reaction is 3'-dephospho-CoA + GTP = GDP + CoA + H(+). The protein operates within cofactor biosynthesis; coenzyme A biosynthesis. Functionally, catalyzes the GTP-dependent phosphorylation of the 3'-hydroxyl group of dephosphocoenzyme A to form coenzyme A (CoA). In Korarchaeum cryptofilum (strain OPF8), this protein is GTP-dependent dephospho-CoA kinase.